Reading from the N-terminus, the 693-residue chain is Homeobox protein caupolican (693 aa).

Disordered stretches follow at residues 20–104 (TANT…PSRG), 288–331 (NKMT…PGNQ), 387–453 (AQSH…DCGI), 480–538 (YLGQ…PLSM), 561–627 (MHLP…SMHS), and 648–693 (YGHG…RSGS). Low complexity predominate over residues 41–59 (ASLSPSGGSTATGLTAGPL). A DNA-binding region (homeobox; TALE-type) is located at residues 226-288 (LAARRKNATR…NARRRLKKEN (63 aa)). Basic and acidic residues-rich tracts occupy residues 288-298 (NKMTWEPKNKT) and 308-317 (DDEKEKDAGD). Composition is skewed to low complexity over residues 397-419 (HPQQMQHHQQQQQQQQNQQQLQH) and 493-515 (QQLPHQPLQQHQQQQLQQLQQQQ). The segment covering 516-527 (QHHHHPHHHHPH) has biased composition (basic residues). Residues 609–627 (SSGGSSSSSGSSHSSSMHS) are compositionally biased toward low complexity. Residues 651–675 (GHSHGHGHGHGHGLGHGHGLGHGHG) show a composition bias toward basic residues.

The protein belongs to the TALE/IRO homeobox family.

It localises to the nucleus. Controls proneural and vein forming genes. Positive transcriptional controller of ac-sc (achaete-scute). May act as an activator that interacts with the transcriptional complex assembled on the ac and sc promoters and participates in transcription initiation. The sequence is that of Homeobox protein caupolican (caup) from Drosophila melanogaster (Fruit fly).